A 303-amino-acid polypeptide reads, in one-letter code: 2-dehydropantoate 2-reductase (303 aa).

Residues 7–12 (GCGALG), Asn98, and Ala122 contribute to the NADP(+) site. Asn98 contacts substrate. Catalysis depends on Lys176, which acts as the Proton donor. Asn180, Asn184, Asn194, and Ser244 together coordinate substrate. Glu256 is a binding site for NADP(+).

The protein belongs to the ketopantoate reductase family.

Its subcellular location is the cytoplasm. It carries out the reaction (R)-pantoate + NADP(+) = 2-dehydropantoate + NADPH + H(+). Its pathway is cofactor biosynthesis; (R)-pantothenate biosynthesis; (R)-pantoate from 3-methyl-2-oxobutanoate: step 2/2. In terms of biological role, catalyzes the NADPH-dependent reduction of ketopantoate into pantoic acid. The chain is 2-dehydropantoate 2-reductase (panE) from Yersinia pestis.